We begin with the raw amino-acid sequence, 276 residues long: Cis-2,3-dihydrobiphenyl-2,3-diol dehydrogenase (276 aa).

9-33 contacts NAD(+); sequence LVTGGGSGLGRAIVDRFVAEGARVA. Residue S142 participates in substrate binding. The active-site Proton acceptor is the Y155.

This sequence belongs to the short-chain dehydrogenases/reductases (SDR) family.

The catalysed reaction is (2R,3S)-3-phenylcyclohexa-3,5-diene-1,2-diol + NAD(+) = biphenyl-2,3-diol + NADH + H(+). It participates in xenobiotic degradation; biphenyl degradation; 2-hydroxy-2,4-pentadienoate and benzoate from biphenyl: step 2/4. This chain is Cis-2,3-dihydrobiphenyl-2,3-diol dehydrogenase (bphB), found in Pseudomonas sp. (strain KKS102).